Reading from the N-terminus, the 1888-residue chain is Zinc finger protein 106 (1888 aa).

Residues R5–H29 form a C2H2-type 1; atypical zinc finger. The C2H2-type 2; atypical zinc finger occupies H43–H67. Residues K68–K187 are disordered. The span at E75 to F89 shows a compositional bias: acidic residues. 3 stretches are compositionally biased toward basic and acidic residues: residues D90–E108, S118–S138, and P150–G160. A Glycyl lysine isopeptide (Lys-Gly) (interchain with G-Cter in SUMO2) cross-link involves residue K91. Residue K155 forms a Glycyl lysine isopeptide (Lys-Gly) (interchain with G-Cter in SUMO2) linkage. Over residues F161–N175 the composition is skewed to polar residues. Glycyl lysine isopeptide (Lys-Gly) (interchain with G-Cter in SUMO2) cross-links involve residues K265 and K309. Disordered regions lie at residues K287 to P326 and R338 to R362. A compositionally biased stretch (basic and acidic residues) spans S296–A311. The segment covering T342–N357 has biased composition (polar residues). Glycyl lysine isopeptide (Lys-Gly) (interchain with G-Cter in SUMO2) cross-links involve residues K375, K384, K390, K435, K469, and K479. Disordered regions lie at residues K410–I437 and T453–S525. Residues G481–S491 are compositionally biased toward basic residues. Positions L507–S525 are enriched in polar residues. Glycyl lysine isopeptide (Lys-Gly) (interchain with G-Cter in SUMO2) cross-links involve residues K524, K534, and K544. Positions K537 to H617 are disordered. The segment covering N551–L572 has biased composition (polar residues). A Glycyl lysine isopeptide (Lys-Gly) (interchain with G-Cter in SUMO2) cross-link involves residue K577. The segment covering K577–K593 has biased composition (basic and acidic residues). Polar residues predominate over residues S597–D613. K620 is covalently cross-linked (Glycyl lysine isopeptide (Lys-Gly) (interchain with G-Cter in SUMO2)). Residues S635 to S661 form a disordered region. The span at G644–S661 shows a compositional bias: polar residues. Phosphoserine occurs at positions 657 and 677. Residues K687, K700, K721, K738, K758, K792, and K824 each participate in a glycyl lysine isopeptide (Lys-Gly) (interchain with G-Cter in SUMO2) cross-link. The disordered stretch occupies residues N696–P728. Residues S876, S878, S881, and S909 each carry the phosphoserine modification. The tract at residues T894–Q920 is disordered. Polar residues predominate over residues A904–Q920. K921 is covalently cross-linked (Glycyl lysine isopeptide (Lys-Gly) (interchain with G-Cter in SUMO2)). S953 carries the phosphoserine modification. Residues A968 to Q986 are compositionally biased toward basic and acidic residues. Disordered stretches follow at residues A968–Q1064, E1281–D1461, and Q1468–L1487. Residues G992–L1008 are compositionally biased toward low complexity. Residues T1013–E1022 are compositionally biased toward polar residues. At T1036 the chain carries Phosphothreonine. Phosphoserine occurs at positions 1040, 1041, and 1046. A compositionally biased stretch (basic residues) spans K1050–K1060. Polar residues predominate over residues E1281–S1296. S1291, S1293, and S1296 each carry phosphoserine. A Glycyl lysine isopeptide (Lys-Gly) (interchain with G-Cter in SUMO2) cross-link involves residue K1310. The span at S1312–S1321 shows a compositional bias: low complexity. S1313 carries the phosphoserine modification. K1335 is covalently cross-linked (Glycyl lysine isopeptide (Lys-Gly) (interchain with G-Cter in SUMO2)). The span at Q1338–S1354 shows a compositional bias: polar residues. S1339 bears the Phosphoserine mark. Basic residues predominate over residues S1360–R1373. At S1381 the chain carries Phosphoserine. At T1383 the chain carries Phosphothreonine. Glycyl lysine isopeptide (Lys-Gly) (interchain with G-Cter in SUMO2) cross-links involve residues K1391, K1403, K1406, and K1460. Residues G1450–D1461 show a composition bias toward basic and acidic residues. Residues P1470–L1487 are compositionally biased toward polar residues. The residue at position 1474 (S1474) is a Phosphoserine. Glycyl lysine isopeptide (Lys-Gly) (interchain with G-Cter in SUMO2) cross-links involve residues K1492 and K1509. The segment at K1509–S1531 is disordered. WD repeat units follow at residues G1534–E1573, H1575–Q1618, H1659–T1700, G1703–K1742, G1743–V1780, and G1783–C1820. A Glycyl lysine isopeptide (Lys-Gly) (interchain with G-Cter in SUMO2) cross-link involves residue K1590. K1742 is covalently cross-linked (Glycyl lysine isopeptide (Lys-Gly) (interchain with G-Cter in SUMO2)). A C2H2-type 3; atypical zinc finger spans residues Y1818–H1843. K1869 participates in a covalent cross-link: Glycyl lysine isopeptide (Lys-Gly) (interchain with G-Cter in SUMO2).

Interacts with KNOP1. Interacts with TARDBP and NUP107. Interacts (via N-terminus) with RBM39. Interacts with the SH3 domains of FYN and GRB2. Post-translationally, phosphorylated by FYN in vitro. Widely expressed, with strongest expression in skeletal muscle, heart and brain (at protein level). Detected in spinal cord motor neurons.

It localises to the nucleus. Its subcellular location is the nucleolus. The protein resides in the nucleus speckle. Functionally, RNA-binding protein. Specifically binds to 5'-GGGGCC-3' sequence repeats in RNA. Essential for maintenance of peripheral motor neuron and skeletal muscle function. Required for normal expression and/or alternative splicing of a number of genes in spinal cord and skeletal muscle, including the neurite outgrowth inhibitor RTN4. Also contributes to normal mitochondrial respiratory function in motor neurons, via an unknown mechanism. The chain is Zinc finger protein 106 (Znf106) from Mus musculus (Mouse).